A 1061-amino-acid chain; its full sequence is DNA primase TraC (1061 aa).

The region spanning 850–938 is the Toprim domain; it reads PALVIGEGYA…GKAIFPIFAP (89 aa). The interval 1034-1061 is disordered; sequence EGQRQKVQQLKQQDIEQQEQRQRRARTY.

Required for autonomous replication in E.coli. Transferred into the recipient cell during bacterial conjugation. Catalyzes the synthesis of short oligoribonucleotide primers with CpA or pCpA at their 5'-termini on a single-stranded template DNA. The sequence is that of DNA primase TraC (traC) from Escherichia coli.